We begin with the raw amino-acid sequence, 389 residues long: Chalcone synthase 1 (389 aa).

The active site involves Cys164.

Belongs to the thiolase-like superfamily. Chalcone/stilbene synthases family.

The enzyme catalyses (E)-4-coumaroyl-CoA + 3 malonyl-CoA + 3 H(+) = 2',4,4',6'-tetrahydroxychalcone + 3 CO2 + 4 CoA. The protein operates within secondary metabolite biosynthesis; flavonoid biosynthesis. The primary product of this enzyme is 4,2',4',6'-tetrahydroxychalcone (also termed naringenin-chalcone or chalcone) which can under specific conditions spontaneously isomerize into naringenin. This chain is Chalcone synthase 1 (CHS1), found in Solanum lycopersicum (Tomato).